The sequence spans 483 residues: ATP-dependent RNA helicase dbp-5 (483 aa).

The segment at 1–47 (MADLASRITKPDEAPAAAPEAAPVSAPASEEPKAPENETSIEESQSN) is disordered. Residues 14 to 29 (APAAAPEAAPVSAPAS) are compositionally biased toward low complexity. The Q motif motif lies at 74-102 (SSFDELGLPEAVNRGLLAINFKKPSKVQE). A Helicase ATP-binding domain is found at 107–276 (LMLSDPPRNM…ERFAPNANQM (170 aa)). 120 to 127 (SQSGTGKT) serves as a coordination point for ATP. The short motif at 223-226 (DEAD) is the DEAD box element. The 152-residue stretch at 304–455 (ILCKLYGLMT…LIQLNPNDLD (152 aa)) folds into the Helicase C-terminal domain.

It belongs to the DEAD box helicase family. DDX19/DBP5 subfamily. In terms of assembly, associates with the nuclear pore complex.

The protein resides in the cytoplasm. It is found in the nucleus. Its subcellular location is the nuclear pore complex. The protein localises to the nucleus membrane. It carries out the reaction ATP + H2O = ADP + phosphate + H(+). Functionally, ATP-dependent RNA helicase associated with the nuclear pore complex and essential for mRNA export from the nucleus. May participate in a terminal step of mRNA export through the removal of proteins that accompany mRNA through the nucleopore complex. May also be involved in early transcription. The chain is ATP-dependent RNA helicase dbp-5 (dbp-5) from Neurospora crassa (strain ATCC 24698 / 74-OR23-1A / CBS 708.71 / DSM 1257 / FGSC 987).